We begin with the raw amino-acid sequence, 365 residues long: Phospho-N-acetylmuramoyl-pentapeptide-transferase (365 aa).

A run of 9 helical transmembrane segments spans residues 19-39, 47-67, 91-111, 115-135, 155-175, 184-204, 224-244, 281-301, and 344-364; these read LLILLTVVLFLLMTLFQWLLT, AVILPVSVSAIACGLLGFGVI, AGTPTMGGIFFIPVAVGVALI, FDPQVVAVGIVTLAYMMIGWV, LLLQIAVAVLFCLWMLWTGSP, GNLIIPLGWLFWILAIFVLVA, AIAFLGLAAIVAPTSVGLMIF, AVGLLSGNLWGLFIISGIFFV, and TQIVGVFYLINAGLAILGFIS.

It belongs to the glycosyltransferase 4 family. MraY subfamily. Mg(2+) is required as a cofactor.

Its subcellular location is the cell inner membrane. It catalyses the reaction UDP-N-acetyl-alpha-D-muramoyl-L-alanyl-gamma-D-glutamyl-meso-2,6-diaminopimeloyl-D-alanyl-D-alanine + di-trans,octa-cis-undecaprenyl phosphate = di-trans,octa-cis-undecaprenyl diphospho-N-acetyl-alpha-D-muramoyl-L-alanyl-D-glutamyl-meso-2,6-diaminopimeloyl-D-alanyl-D-alanine + UMP. Its pathway is cell wall biogenesis; peptidoglycan biosynthesis. Its function is as follows. Catalyzes the initial step of the lipid cycle reactions in the biosynthesis of the cell wall peptidoglycan: transfers peptidoglycan precursor phospho-MurNAc-pentapeptide from UDP-MurNAc-pentapeptide onto the lipid carrier undecaprenyl phosphate, yielding undecaprenyl-pyrophosphoryl-MurNAc-pentapeptide, known as lipid I. The protein is Phospho-N-acetylmuramoyl-pentapeptide-transferase of Gloeothece citriformis (strain PCC 7424) (Cyanothece sp. (strain PCC 7424)).